A 367-amino-acid chain; its full sequence is Ribosomal RNA large subunit methyltransferase M (367 aa).

S-adenosyl-L-methionine-binding positions include serine 188, 221-224 (CPGG), aspartate 240, aspartate 260, and aspartate 277. Lysine 306 acts as the Proton acceptor in catalysis.

It belongs to the class I-like SAM-binding methyltransferase superfamily. RNA methyltransferase RlmE family. RlmM subfamily. As to quaternary structure, monomer.

The protein localises to the cytoplasm. It carries out the reaction cytidine(2498) in 23S rRNA + S-adenosyl-L-methionine = 2'-O-methylcytidine(2498) in 23S rRNA + S-adenosyl-L-homocysteine + H(+). Catalyzes the 2'-O-methylation at nucleotide C2498 in 23S rRNA. This chain is Ribosomal RNA large subunit methyltransferase M, found in Serratia proteamaculans (strain 568).